Consider the following 183-residue polypeptide: Ubiquitin carboxyl-terminal hydrolase 17-like protein 23 (183 aa).

Positions 80–183 (AGLQNMGNTC…KACLPGHKQV (104 aa)) constitute a USP domain.

The protein belongs to the peptidase C19 family. USP17 subfamily.

Its subcellular location is the nucleus. The protein localises to the endoplasmic reticulum. The sequence is that of Ubiquitin carboxyl-terminal hydrolase 17-like protein 23 (USP17L23) from Homo sapiens (Human).